The primary structure comprises 129 residues: 3-aminoacrylate deaminase RutC (129 aa).

Belongs to the RutC family.

It carries out the reaction (Z)-3-aminoacrylate + H2O + H(+) = 3-oxopropanoate + NH4(+). In terms of biological role, involved in pyrimidine catabolism. Catalyzes the deamination of 3-aminoacrylate to malonic semialdehyde, a reaction that can also occur spontaneously. RutC may facilitate the reaction and modulate the metabolic fitness, rather than catalyzing essential functions. The chain is 3-aminoacrylate deaminase RutC from Caulobacter vibrioides (strain ATCC 19089 / CIP 103742 / CB 15) (Caulobacter crescentus).